A 144-amino-acid polypeptide reads, in one-letter code: Glutamyl-tRNA(Gln) amidotransferase subunit C, mitochondrial (144 aa).

The transit peptide at 1-17 directs the protein to the mitochondrion; it reads MFRRSVSFVRSHVLRSF.

This sequence belongs to the GatC family. Subunit of the heterotrimeric GatCAB amidotransferase (AdT) complex, composed of A, B and C subunits.

Its subcellular location is the mitochondrion. It catalyses the reaction L-glutamyl-tRNA(Gln) + L-glutamine + ATP + H2O = L-glutaminyl-tRNA(Gln) + L-glutamate + ADP + phosphate + H(+). In terms of biological role, allows the formation of correctly charged Gln-tRNA(Gln) through the transamidation of misacylated Glu-tRNA(Gln) in the mitochondria. The reaction takes place in the presence of glutamine and ATP through an activated gamma-phospho-Glu-tRNA(Gln). This Ixodes scapularis (Black-legged tick) protein is Glutamyl-tRNA(Gln) amidotransferase subunit C, mitochondrial.